Reading from the N-terminus, the 319-residue chain is Ciliary microtubule inner protein 2A (319 aa).

The protein belongs to the CIMIP2 family. As to quaternary structure, microtubule inner protein component of sperm flagellar doublet microtubules.

It is found in the cytoplasm. It localises to the cytoskeleton. Its subcellular location is the flagellum axoneme. Its function is as follows. Microtubule inner protein (MIP) part of the dynein-decorated doublet microtubules (DMTs) in flagellum axoneme. Binds to the intra-tubulin interfaces. The sequence is that of Ciliary microtubule inner protein 2A (Cimip2a) from Mus musculus (Mouse).